The chain runs to 317 residues: Beta-ketoacyl-[acyl-carrier-protein] synthase III (317 aa).

Active-site residues include Cys-112 and His-244. The interval Gln-245–Arg-249 is ACP-binding. Residue Asn-274 is part of the active site.

It belongs to the thiolase-like superfamily. FabH family. Homodimer.

The protein localises to the cytoplasm. The enzyme catalyses malonyl-[ACP] + acetyl-CoA + H(+) = 3-oxobutanoyl-[ACP] + CO2 + CoA. It functions in the pathway lipid metabolism; fatty acid biosynthesis. Catalyzes the condensation reaction of fatty acid synthesis by the addition to an acyl acceptor of two carbons from malonyl-ACP. Catalyzes the first condensation reaction which initiates fatty acid synthesis and may therefore play a role in governing the total rate of fatty acid production. Possesses both acetoacetyl-ACP synthase and acetyl transacylase activities. Its substrate specificity determines the biosynthesis of branched-chain and/or straight-chain of fatty acids. The polypeptide is Beta-ketoacyl-[acyl-carrier-protein] synthase III (Rickettsia massiliae (strain Mtu5)).